We begin with the raw amino-acid sequence, 297 residues long: MGKQVDSKTITWVIENFSSLQSASIHSDQFVVGDCKWRLKAYPKGNEKATYLAYRANNLALYLNVANSKSFPIGWTRHTKFSLTLVNQKSEKLSKLTESQHWFDHKSTSRGFPAMIPLTNLHTNEGFLVNGELTLVAKVEVLEVVGKLDVSKKSSPVMETIDVNGFQVLPQIESVNRLFAKHLDIASKFRPKKPYMKTAYMNVLLSLTKTLCQSPQDLSNDDISGAGAALTYLREAGFKLDWLEKKHGEIKEKKKKEEASLKRLQEMEKQIFNEAQIYKEKVLAARAPLSLNEDNVF.

One can recognise an MATH domain in the interval 7–139 (SKTITWVIEN…NGELTLVAKV (133 aa)). Residues 239–281 (KLDWLEKKHGEIKEKKKKEEASLKRLQEMEKQIFNEAQIYKEK) are a coiled coil.

The protein is MATH domain and coiled-coil domain-containing protein At2g05420 of Arabidopsis thaliana (Mouse-ear cress).